The sequence spans 125 residues: UPF0332 protein AF_0298 (125 aa).

This sequence belongs to the UPF0332 family.

This Archaeoglobus fulgidus (strain ATCC 49558 / DSM 4304 / JCM 9628 / NBRC 100126 / VC-16) protein is UPF0332 protein AF_0298.